The primary structure comprises 469 residues: MTTKTRFAPSPTGFLHVGGARTALYSWLQARANNGEFVLRIEDTDIERSTQAACDAILEGMNWLGLTWDEGPYYQTKRFDRYNEIIAQMLEQGTAYKCYCSRERIDALREAQAANGEAQKYDGCCRDLPARDTDEPFVVRFKNPIGGSVVFDDHVRGRIEFSNDALDDLIIARTDGVPTYNFCVVVDDWDMGITCVVRGEDHINNTPRQINILKALGAPIPEYAHVSMILGDDGAKLSKRHGAVSVMQYRDDGYLPEALLNYLVRLGWSHGDQEVFSLEEMKQLFKLDDINKAPSAFNTEKLVWLNQHYIKTLDPEYVASHLQWHMDDQKIDTSNGPALSAVVTALAERAKTLKELAASSRYFYEDFAEFDAEQAKKHLRGVALEPLQLVQQKLAALTEWTVEAIHQAIEATATELEVGMGKVGMPLRVAVTGAGQSPGLDITLFLIGKARSEQRISKAIEFVADRINS.

A 'HIGH' region motif is present at residues 9–19 (PSPTGFLHVGG). 4 residues coordinate Zn(2+): Cys98, Cys100, Cys125, and Asp127. A 'KMSKS' region motif is present at residues 236 to 240 (KLSKR). Residue Lys239 participates in ATP binding.

This sequence belongs to the class-I aminoacyl-tRNA synthetase family. Glutamate--tRNA ligase type 1 subfamily. Monomer. Requires Zn(2+) as cofactor.

Its subcellular location is the cytoplasm. It carries out the reaction tRNA(Glu) + L-glutamate + ATP = L-glutamyl-tRNA(Glu) + AMP + diphosphate. Catalyzes the attachment of glutamate to tRNA(Glu) in a two-step reaction: glutamate is first activated by ATP to form Glu-AMP and then transferred to the acceptor end of tRNA(Glu). In Shewanella sp. (strain ANA-3), this protein is Glutamate--tRNA ligase.